A 519-amino-acid polypeptide reads, in one-letter code: Bud site selection protein 22 (519 aa).

A disordered region spans residues 241–497; the sequence is EKTANANQTH…STGEEHPSWI (257 aa). Positions 244–254 are enriched in polar residues; sequence ANANQTHSNID. Residue threonine 257 is modified to Phosphothreonine. Positions 267–282 are enriched in polar residues; that stretch reads DSKSNAIGAQTQSNKE. Positions 321–337 are enriched in acidic residues; the sequence is VTDEEPSEASSDEDDSD. Over residues 338–348 the composition is skewed to basic and acidic residues; it reads ERFSDSEENEP. Serine 367 carries the post-translational modification Phosphoserine. Threonine 371 carries the post-translational modification Phosphothreonine. Position 375 is a phosphoserine (serine 375). Basic residues predominate over residues 407–420; the sequence is RKNRRGQRARRKIW. Positions 426-470 form a coiled coil; sequence SQAKHVQRELEKEMEDRKQRQIEYEARVAKREAKAASLEASRSRE. Composition is skewed to basic and acidic residues over residues 431-459 and 466-497; these read VQRE…REAK and SRSR…PSWI.

This sequence belongs to the BUD22 family.

It localises to the nucleus. Involved in positioning the proximal bud pole signal. The chain is Bud site selection protein 22 (BUD22) from Saccharomyces cerevisiae (strain ATCC 204508 / S288c) (Baker's yeast).